The following is a 295-amino-acid chain: Glutamyl-Q tRNA(Asp) synthetase (295 aa).

Residues 9–13 (RFAPT) and E45 each bind L-glutamate. A 'HIGH' region motif is present at residues 12-22 (PTPSGYLHFGS). The Zn(2+) site is built by C101, C103, Y115, and C119. Residues Y172 and R190 each contribute to the L-glutamate site. Residues 228 to 232 (KLGKS) carry the 'KMSKS' region motif. An ATP-binding site is contributed by K231.

This sequence belongs to the class-I aminoacyl-tRNA synthetase family. GluQ subfamily. It depends on Zn(2+) as a cofactor.

Catalyzes the tRNA-independent activation of glutamate in presence of ATP and the subsequent transfer of glutamate onto a tRNA(Asp). Glutamate is transferred on the 2-amino-5-(4,5-dihydroxy-2-cyclopenten-1-yl) moiety of the queuosine in the wobble position of the QUC anticodon. This Pseudomonas syringae pv. syringae (strain B728a) protein is Glutamyl-Q tRNA(Asp) synthetase.